The following is a 487-amino-acid chain: 3-octaprenyl-4-hydroxybenzoate carboxy-lyase (487 aa).

Asn172 lines the Mn(2+) pocket. Prenylated FMN contacts are provided by residues 175–177, 189–191, and 194–195; these read IYR, RWL, and RG. Residue Glu238 coordinates Mn(2+). The active-site Proton donor is the Asp287.

The protein belongs to the UbiD family. In terms of assembly, homohexamer. The cofactor is prenylated FMN. It depends on Mn(2+) as a cofactor.

The protein localises to the cell membrane. The catalysed reaction is a 4-hydroxy-3-(all-trans-polyprenyl)benzoate + H(+) = a 2-(all-trans-polyprenyl)phenol + CO2. The protein operates within cofactor biosynthesis; ubiquinone biosynthesis. In terms of biological role, catalyzes the decarboxylation of 3-octaprenyl-4-hydroxy benzoate to 2-octaprenylphenol, an intermediate step in ubiquinone biosynthesis. In Nitrosomonas europaea (strain ATCC 19718 / CIP 103999 / KCTC 2705 / NBRC 14298), this protein is 3-octaprenyl-4-hydroxybenzoate carboxy-lyase.